The sequence spans 338 residues: Nicotinate-nucleotide--dimethylbenzimidazole phosphoribosyltransferase (338 aa).

The active-site Proton acceptor is Glu305.

It belongs to the CobT family.

It catalyses the reaction 5,6-dimethylbenzimidazole + nicotinate beta-D-ribonucleotide = alpha-ribazole 5'-phosphate + nicotinate + H(+). The protein operates within nucleoside biosynthesis; alpha-ribazole biosynthesis; alpha-ribazole from 5,6-dimethylbenzimidazole: step 1/2. Its function is as follows. Catalyzes the synthesis of alpha-ribazole-5'-phosphate from nicotinate mononucleotide (NAMN) and 5,6-dimethylbenzimidazole (DMB). The protein is Nicotinate-nucleotide--dimethylbenzimidazole phosphoribosyltransferase of Rhizobium leguminosarum bv. trifolii (strain WSM2304).